The following is a 314-amino-acid chain: Protoheme IX farnesyltransferase (314 aa).

Helical transmembrane passes span 31–51 (VMSL…GHFH), 52–72 (PVLA…SGAL), 119–139 (ILVN…YVVI), 152–172 (IVIG…AVTG), 179–199 (LLLF…LALF), 225–245 (ILLY…LGYF), 247–267 (AVYG…AINV), and 284–304 (FAFS…EVVF).

The protein belongs to the UbiA prenyltransferase family. Protoheme IX farnesyltransferase subfamily.

The protein localises to the cell inner membrane. It catalyses the reaction heme b + (2E,6E)-farnesyl diphosphate + H2O = Fe(II)-heme o + diphosphate. Its pathway is porphyrin-containing compound metabolism; heme O biosynthesis; heme O from protoheme: step 1/1. In terms of biological role, converts heme B (protoheme IX) to heme O by substitution of the vinyl group on carbon 2 of heme B porphyrin ring with a hydroxyethyl farnesyl side group. The chain is Protoheme IX farnesyltransferase from Bradyrhizobium diazoefficiens (strain JCM 10833 / BCRC 13528 / IAM 13628 / NBRC 14792 / USDA 110).